The following is a 341-amino-acid chain: MAKIYYNDDADLSIIQNRSVAIIGYGSQGHAHALNLRDSGVDVRIGLNEGSKSRAKAEAEGLQVMSIAEAAKEADVIMILTPDQVQAQVYEESIKDNLEEGDAIFFAHGFNIRFGYIEAPQGVDVAMVAPKGPGHTVRREFEAGRGVPDLVAVEVDASGNALQLALSYAKGIGGTRAGVIETTFTEETESDLFGEQAVLCGGMSHLVQYGFEVLTEAGYQPEIAYFEVLHELKLIVDLMVEGGIAKQRWSISDTAEYGDYVSGPRVIDPSVKERMQDVLKDIQEGVFADRFMKDQASGAKEFKELRAKEEKHPIETTGRKLRSLFAWEQTDADYTEGTAAR.

The KARI N-terminal Rossmann domain maps to 2–182 (AKIYYNDDAD…GGTRAGVIET (181 aa)). NADP(+) is bound by residues 25 to 28 (YGSQ), serine 51, serine 53, and 83 to 86 (DQVQ). Histidine 108 is an active-site residue. An NADP(+)-binding site is contributed by glycine 134. The region spanning 183 to 328 (TFTEETESDL…RKLRSLFAWE (146 aa)) is the KARI C-terminal knotted domain. Aspartate 191, glutamate 195, glutamate 227, and glutamate 231 together coordinate Mg(2+). Substrate is bound at residue serine 252.

This sequence belongs to the ketol-acid reductoisomerase family. It depends on Mg(2+) as a cofactor.

It catalyses the reaction (2R)-2,3-dihydroxy-3-methylbutanoate + NADP(+) = (2S)-2-acetolactate + NADPH + H(+). It carries out the reaction (2R,3R)-2,3-dihydroxy-3-methylpentanoate + NADP(+) = (S)-2-ethyl-2-hydroxy-3-oxobutanoate + NADPH + H(+). The protein operates within amino-acid biosynthesis; L-isoleucine biosynthesis; L-isoleucine from 2-oxobutanoate: step 2/4. Its pathway is amino-acid biosynthesis; L-valine biosynthesis; L-valine from pyruvate: step 2/4. Functionally, involved in the biosynthesis of branched-chain amino acids (BCAA). Catalyzes an alkyl-migration followed by a ketol-acid reduction of (S)-2-acetolactate (S2AL) to yield (R)-2,3-dihydroxy-isovalerate. In the isomerase reaction, S2AL is rearranged via a Mg-dependent methyl migration to produce 3-hydroxy-3-methyl-2-ketobutyrate (HMKB). In the reductase reaction, this 2-ketoacid undergoes a metal-dependent reduction by NADPH to yield (R)-2,3-dihydroxy-isovalerate. The chain is Ketol-acid reductoisomerase (NADP(+)) from Kocuria rhizophila (strain ATCC 9341 / DSM 348 / NBRC 103217 / DC2201).